The following is a 360-amino-acid chain: 3-isopropylmalate dehydrogenase (360 aa).

76-89 (GPKWDKIERDIRPE) serves as a coordination point for NAD(+). Substrate is bound by residues arginine 96, arginine 106, arginine 134, and aspartate 224. Mg(2+) is bound by residues aspartate 224, aspartate 248, and aspartate 252. An NAD(+)-binding site is contributed by 282–294 (GSAPDIAGLGIAN).

The protein belongs to the isocitrate and isopropylmalate dehydrogenases family. LeuB type 1 subfamily. In terms of assembly, homodimer. The cofactor is Mg(2+). Mn(2+) is required as a cofactor.

Its subcellular location is the cytoplasm. The enzyme catalyses (2R,3S)-3-isopropylmalate + NAD(+) = 4-methyl-2-oxopentanoate + CO2 + NADH. Its pathway is amino-acid biosynthesis; L-leucine biosynthesis; L-leucine from 3-methyl-2-oxobutanoate: step 3/4. In terms of biological role, catalyzes the oxidation of 3-carboxy-2-hydroxy-4-methylpentanoate (3-isopropylmalate) to 3-carboxy-4-methyl-2-oxopentanoate. The product decarboxylates to 4-methyl-2 oxopentanoate. In Pseudomonas putida (strain ATCC 47054 / DSM 6125 / CFBP 8728 / NCIMB 11950 / KT2440), this protein is 3-isopropylmalate dehydrogenase.